The following is a 553-amino-acid chain: MTRGGPGGRPGLPQPPPLLLLLLLLPLLLVTAEPPKPAGVYYATAYWMPAEKTVQVKNVMDKNGDAYGFYNNSVKTTGWGILEIRAGYGSQTLSNEIIMFVAGFLEGYLTAPHMNDHYTNLYPQLITKPSIMDKVQDFMEKQDKWTRKNIKEYKTDSFWRHTGYVMAQIDGLYVGAKKRAILEGTKPMTLFQIQFLNSVGDLLDLIPSLSPTKNGSLKVFKRWDMGHCSALIKVLPGFENILFAHSSWYTYAAMLRIYKHWDFNVIDKDTSSSRLSFSSYPGFLESLDDFYILSSGLILLQTTNSVFNKTLLKQVIPETLLSWQRVRVANMMADSGKRWADIFSKYNSGTYNNQYMVLDLKKVKLNHSLDKGTLYIVEQIPTYVEYSEQTDVLRKGYWPSYNVPFHEKIYNWSGYPLLVQKLGLDYSYDLAPRAKIFRRDQGKVTDTASMKYIMRYNNYKKDPYSRGDPCNTICCREDLNSPNPSPGGCYDTKVADIYLASQYTSYAISGPTVQGGLPVFRWDRFNKTLHQGMPEVYNFDFITMKPILKLDIK.

A signal peptide spans 1 to 38 (MTRGGPGGRPGLPQPPPLLLLLLLLPLLLVTAEPPKPA). N71 carries an N-linked (GlcNAc...) (high mannose) asparagine; alternate glycan. Residue N71 is glycosylated (N-linked (GlcNAc...) (hybrid) asparagine; alternate). Residues 209–227 (LSPTKNGSLKVFKRWDMGH) constitute a propeptide, removed in mature form. N-linked (GlcNAc...) (high mannose) asparagine; alternate glycans are attached at residues N308 and N366. 2 N-linked (GlcNAc...) (hybrid) asparagine; alternate glycosylation sites follow: N308 and N366. N411 is a glycosylation site (N-linked (GlcNAc...) asparagine). Disulfide bonds link C470–C475 and C474–C489. Residue N526 is glycosylated (N-linked (GlcNAc...) (high mannose) asparagine; alternate). An N-linked (GlcNAc...) (hybrid) asparagine; alternate glycan is attached at N526.

This sequence belongs to the phospholipase B-like family. In terms of assembly, may form a homodimer, each monomer is composed of a chain A and a chain B. In terms of processing, the maturation cleavages that produces chains A and B are required to open the putative substrate binding pocket. Both chains A and B remain associated in the mature protein. In terms of tissue distribution, expressed in neutrophils and monocytes.

It is found in the lysosome. In terms of biological role, in view of the small size of the putative binding pocket, it has been proposed that it may act as an amidase or a peptidase. Exhibits a weak phospholipase activity, acting on various phospholipids, including phosphatidylcholine, phosphatidylinositol, phosphatidylethanolamine and lysophospholipids. This chain is Phospholipase B-like 1 (PLBD1), found in Homo sapiens (Human).